Consider the following 127-residue polypeptide: Fluoride-specific ion channel FluC (127 aa).

Helical transmembrane passes span 6 to 26 (LAIS…GLGF), 37 to 57 (TLLA…FFAA), 67 to 87 (LLVI…SAEV), and 96 to 116 (LLWA…MTLL). Residues glycine 75 and threonine 78 each contribute to the Na(+) site.

This sequence belongs to the fluoride channel Fluc/FEX (TC 1.A.43) family.

It is found in the cell inner membrane. The enzyme catalyses fluoride(in) = fluoride(out). Na(+) is not transported, but it plays an essential structural role and its presence is essential for fluoride channel function. Fluoride-specific ion channel. Important for reducing fluoride concentration in the cell, thus reducing its toxicity. In Tolumonas auensis (strain DSM 9187 / NBRC 110442 / TA 4), this protein is Fluoride-specific ion channel FluC.